The sequence spans 207 residues: Ras-related protein Rab7 (207 aa).

Residues Gly15 to Thr22, Ser34 to Thr40, Asp63 to Gln67, Asn125 to Asp128, and Ala156 to Lys157 each bind GTP. The short motif at Tyr37–Phe45 is the Effector region element. 2 S-geranylgeranyl cysteine lipidation sites follow: Cys205 and Cys207.

The protein belongs to the small GTPase superfamily. Rab family. In terms of tissue distribution, expressed in eye (at protein level).

It localises to the early endosome membrane. The protein localises to the late endosome membrane. It is found in the lysosome membrane. Its subcellular location is the cytoplasmic vesicle. The protein resides in the autophagosome membrane. It localises to the autolysosome membrane. The protein localises to the presynapse. It is found in the perikaryon. The enzyme catalyses GTP + H2O = GDP + phosphate + H(+). Functionally, small GTPase which cycles between active GTP-bound and inactive GDP-bound states. In its active state, binds to a variety of effector proteins playing a key role in the regulation of endo-lysosomal trafficking. Involved in microtubule minus and plus end-directed endosomal migration and positioning, and endosome-lysosome transport through different protein-protein interaction cascades. Governs early-to-late endosomal to lysosomal maturation. Controls endocytic cargo sorting towards the late endosome facilitating its eventual endolysosomal-mediated degradation. Together with Rab2 involved in promoting fusion of autophagosomes and endosomes with lysosomes probably through recruitment of the HOPS tethering complex. Involved in biosynthetic transport to lysosomes. Involved in establishing morphogen concentration gradients, for example of the TGF-beta homolog dpp/decapentaplegic, during pattern formation and organogenesis. Together with the Mon1-Ccz1 complex, required for autolysosome formation in fat cells and autophagic degradation during starvation-induced basal and developmental autophagy. Together with Mon1, regulates levels of postsynaptic glutamate receptor GluRIIA in the neuromuscular junction (NMJ) presynapse. Required for autophagocytosis-dependent remodeling of myofibrils and transverse-tubules (T-tubules) during metamorphosis. Involved in intracellular trafficking of the carbohydrate transporter Tret1 in glial cells of the blood brain barrier, influencing its subcellular localization and protein levels. This chain is Ras-related protein Rab7, found in Drosophila melanogaster (Fruit fly).